The following is a 327-amino-acid chain: Zinc transport protein ZntB (327 aa).

Residues 1 to 273 lie on the Cytoplasmic side of the membrane; sequence MEAIKGSDVN…ARRTYTMSLM (273 aa). The chain crosses the membrane as a helical span at residues 274 to 294; the sequence is AMVFLPSTFLTGLFGVNLGGI. The Periplasmic segment spans residues 295 to 300; it reads PGGGWR. A helical transmembrane segment spans residues 301-321; the sequence is FGFSLFCILLVVLIGGVTLWL. The Cytoplasmic segment spans residues 322-327; it reads HRSKWL.

This sequence belongs to the CorA metal ion transporter (MIT) (TC 1.A.35) family.

Its subcellular location is the cell inner membrane. The catalysed reaction is Zn(2+)(out) + H(+)(out) = Zn(2+)(in) + H(+)(in). Zinc transporter. Acts as a Zn(2+):proton symporter, which likely mediates zinc ion uptake. The sequence is that of Zinc transport protein ZntB from Salmonella enteritidis PT4 (strain P125109).